Consider the following 104-residue polypeptide: Large ribosomal subunit protein uL24 (104 aa).

It belongs to the universal ribosomal protein uL24 family. Part of the 50S ribosomal subunit.

One of two assembly initiator proteins, it binds directly to the 5'-end of the 23S rRNA, where it nucleates assembly of the 50S subunit. Functionally, one of the proteins that surrounds the polypeptide exit tunnel on the outside of the subunit. The protein is Large ribosomal subunit protein uL24 of Escherichia coli O81 (strain ED1a).